Consider the following 911-residue polypeptide: ATP-dependent DNA helicase Q-like 5 (911 aa).

The interval 1–84 (MDFDSDSDGS…PPPSPLFTNL (84 aa)) is disordered. The span at 20–48 (SFPSSPPQLQSPAKHVPPVSRKMTSSSSR) shows a compositional bias: low complexity. The segment covering 54–79 (PTHPPPNPSQEAPVPSPYPPPPPPSP) has biased composition (pro residues). In terms of domain architecture, Helicase ATP-binding spans 278–448 (IKMILGGSST…MSSLEIPSTN (171 aa)). Residue 291–298 (LPTGAGKS) participates in ATP binding. The DEAH box signature appears at 390–393 (DEAH). The region spanning 470-628 (RMKDLLILME…VFSTETKQHE (159 aa)) is the Helicase C-terminal domain.

The protein belongs to the helicase family. RecQ subfamily. As to expression, mostly expressed in roots, seedlings, shoots, shoot apical mersitem, flowers, and siliques.

The protein localises to the nucleus. The catalysed reaction is Couples ATP hydrolysis with the unwinding of duplex DNA by translocating in the 3'-5' direction.. It carries out the reaction ATP + H2O = ADP + phosphate + H(+). Functionally, 3'-5' DNA helicase that may play a role in the repair of DNA. In Arabidopsis thaliana (Mouse-ear cress), this protein is ATP-dependent DNA helicase Q-like 5 (RECQL5).